The primary structure comprises 344 residues: GPALPP motifs-containing protein 1 (344 aa).

The interval 1-309 (MARDLIGPAL…QERIPFDRDK (309 aa)) is disordered. Position 2 is an N-acetylalanine (A2). The short motif at 7–12 (GPALPP) is the GPALPP motif 1 element. The residue at position 28 (S28) is a Phosphoserine. The GPALPP motif 2 motif lies at 30-35 (GPALPP). 2 stretches are compositionally biased toward acidic residues: residues 58–67 (GNQESEEDDT) and 80–93 (DDNDDDDDDDDDDG). A GPALPP motif 3 motif is present at residues 96 to 101 (GPALPP). Residue S109 is modified to Phosphoserine. Residues 111–120 (PRPIIGPALP) are compositionally biased toward pro residues. Positions 116-121 (GPALPP) match the GPALPP motif 4 motif. The span at 128 to 137 (QKSDKGRDDP) shows a compositional bias: basic and acidic residues. T142 is subject to Phosphothreonine. Residues S144 and S145 each carry the phosphoserine modification. Composition is skewed to basic and acidic residues over residues 167–191 (EFEKRAQRMKEKLTKGDDDSSKPIV), 231–265 (PADRERKAKETQEARKSSSKKDEEHILSGRDKRLA), 273–283 (ESKRSESLMDI), and 291–309 (KAAEDKNKPQERIPFDRDK). Residue K275 forms a Glycyl lysine isopeptide (Lys-Gly) (interchain with G-Cter in SUMO2) linkage. K312 participates in a covalent cross-link: Glycyl lysine isopeptide (Lys-Gly) (interchain with G-Cter in SUMO2).

The polypeptide is GPALPP motifs-containing protein 1 (GPALPP1) (Pongo abelii (Sumatran orangutan)).